The primary structure comprises 212 residues: Pyridoxine/pyridoxamine 5'-phosphate oxidase (212 aa).

Substrate is bound by residues 8–11 and lysine 66; that span reads RTDY. Residues 61–66, 76–77, lysine 83, and glutamine 105 each bind FMN; these read RIVLLK and FT. Substrate is bound by residues tyrosine 123, arginine 127, and serine 131. Residues 140–141 and tryptophan 184 each bind FMN; that span reads QS. 190–192 lines the substrate pocket; it reads RLH. Arginine 194 provides a ligand contact to FMN.

Belongs to the pyridoxamine 5'-phosphate oxidase family. In terms of assembly, homodimer. It depends on FMN as a cofactor.

It catalyses the reaction pyridoxamine 5'-phosphate + O2 + H2O = pyridoxal 5'-phosphate + H2O2 + NH4(+). It carries out the reaction pyridoxine 5'-phosphate + O2 = pyridoxal 5'-phosphate + H2O2. Its pathway is cofactor metabolism; pyridoxal 5'-phosphate salvage; pyridoxal 5'-phosphate from pyridoxamine 5'-phosphate: step 1/1. It participates in cofactor metabolism; pyridoxal 5'-phosphate salvage; pyridoxal 5'-phosphate from pyridoxine 5'-phosphate: step 1/1. In terms of biological role, catalyzes the oxidation of either pyridoxine 5'-phosphate (PNP) or pyridoxamine 5'-phosphate (PMP) into pyridoxal 5'-phosphate (PLP). The chain is Pyridoxine/pyridoxamine 5'-phosphate oxidase from Ralstonia pickettii (strain 12J).